The chain runs to 362 residues: Phosphoserine aminotransferase (362 aa).

L-glutamate contacts are provided by S9 and R42. Residues 76-77 (GR), W102, T153, D174, and Q197 contribute to the pyridoxal 5'-phosphate site. K198 carries the N6-(pyridoxal phosphate)lysine modification. 239 to 240 (NT) is a pyridoxal 5'-phosphate binding site.

The protein belongs to the class-V pyridoxal-phosphate-dependent aminotransferase family. SerC subfamily. In terms of assembly, homodimer. Pyridoxal 5'-phosphate is required as a cofactor.

The protein resides in the cytoplasm. It carries out the reaction O-phospho-L-serine + 2-oxoglutarate = 3-phosphooxypyruvate + L-glutamate. The catalysed reaction is 4-(phosphooxy)-L-threonine + 2-oxoglutarate = (R)-3-hydroxy-2-oxo-4-phosphooxybutanoate + L-glutamate. It participates in amino-acid biosynthesis; L-serine biosynthesis; L-serine from 3-phospho-D-glycerate: step 2/3. Its pathway is cofactor biosynthesis; pyridoxine 5'-phosphate biosynthesis; pyridoxine 5'-phosphate from D-erythrose 4-phosphate: step 3/5. In terms of biological role, catalyzes the reversible conversion of 3-phosphohydroxypyruvate to phosphoserine and of 3-hydroxy-2-oxo-4-phosphonooxybutanoate to phosphohydroxythreonine. The chain is Phosphoserine aminotransferase from Salmonella arizonae (strain ATCC BAA-731 / CDC346-86 / RSK2980).